The chain runs to 251 residues: Alanyl-tRNA editing protein AlaX-M (251 aa).

Zn(2+) contacts are provided by H107, H111, C210, and H214.

The protein belongs to the class-II aminoacyl-tRNA synthetase family. Editing domain AlaX-M subfamily. Requires Zn(2+) as cofactor.

The protein localises to the cytoplasm. Functionally, functions in trans to edit the amino acid moiety from mischarged Ser-tRNA(Ala). Recognition depends, at least in part, on the acceptor stem of tRNA(Ala). The polypeptide is Alanyl-tRNA editing protein AlaX-M (alaXM) (Methanosarcina mazei (strain ATCC BAA-159 / DSM 3647 / Goe1 / Go1 / JCM 11833 / OCM 88) (Methanosarcina frisia)).